Reading from the N-terminus, the 440-residue chain is Chromosome partition protein MukF (440 aa).

Positions 208–236 are leucine-zipper; the sequence is LSETSGTLRELQDTLDAAGDKLQANLLRI.

The protein belongs to the MukF family. In terms of assembly, interacts, and probably forms a ternary complex, with MukE and MukB via its C-terminal region. The complex formation is stimulated by calcium or magnesium. It is required for an interaction between MukE and MukB.

The protein resides in the cytoplasm. The protein localises to the nucleoid. Involved in chromosome condensation, segregation and cell cycle progression. May participate in facilitating chromosome segregation by condensation DNA from both sides of a centrally located replisome during cell division. Not required for mini-F plasmid partitioning. Probably acts via its interaction with MukB and MukE. Overexpression results in anucleate cells. It has a calcium binding activity. In Klebsiella pneumoniae subsp. pneumoniae (strain ATCC 700721 / MGH 78578), this protein is Chromosome partition protein MukF.